The chain runs to 598 residues: Serine hydroxymethyltransferase 7 (598 aa).

The disordered stretch occupies residues 57–85; that stretch reads QLLEQKAEKTTTVDEPKKDGGGGGDQKED. Residues 61-85 are compositionally biased toward basic and acidic residues; it reads QKAEKTTTVDEPKKDGGGGGDQKED. Lysine 370 carries the N6-(pyridoxal phosphate)lysine modification.

It belongs to the SHMT family. In terms of assembly, homotetramer. The cofactor is pyridoxal 5'-phosphate.

The protein localises to the cytoplasm. The enzyme catalyses (6R)-5,10-methylene-5,6,7,8-tetrahydrofolate + glycine + H2O = (6S)-5,6,7,8-tetrahydrofolate + L-serine. Its pathway is one-carbon metabolism; tetrahydrofolate interconversion. Catalyzes the interconversion of serine and glycine. The sequence is that of Serine hydroxymethyltransferase 7 (SHM7) from Arabidopsis thaliana (Mouse-ear cress).